The sequence spans 511 residues: Probable DNA ligase (511 aa).

Glu-208 contributes to the ATP binding site. Residue Lys-210 is the N6-AMP-lysine intermediate of the active site. Residues Arg-215, Arg-230, Glu-259, Phe-299, Arg-377, and Lys-383 each contribute to the ATP site.

The protein belongs to the ATP-dependent DNA ligase family. It depends on Mg(2+) as a cofactor.

It carries out the reaction ATP + (deoxyribonucleotide)n-3'-hydroxyl + 5'-phospho-(deoxyribonucleotide)m = (deoxyribonucleotide)n+m + AMP + diphosphate.. DNA ligase that seals nicks in double-stranded DNA during DNA replication, DNA recombination and DNA repair. This chain is Probable DNA ligase, found in Streptomyces griseus subsp. griseus (strain JCM 4626 / CBS 651.72 / NBRC 13350 / KCC S-0626 / ISP 5235).